The sequence spans 354 residues: Arginase-2, mitochondrial (354 aa).

The N-terminal 22 residues, 1–22, are a transit peptide targeting the mitochondrion; the sequence is MSLRGSLSRLLQTRVHSILKKS. 4 residues coordinate Mn(2+): His-120, Asp-143, His-145, and Asp-147. Substrate contacts are provided by residues 145–149, 156–158, and Asp-202; these read HADIN and SGN. Residues Asp-251 and Asp-253 each coordinate Mn(2+). Residues Thr-265 and Glu-296 each coordinate substrate. The interval 334 to 354 is disordered; sequence YDQLPTPSSPDESENQARVRI.

The protein belongs to the arginase family. Homotrimer. Mn(2+) serves as cofactor. In terms of tissue distribution, expressed most strongly in kidney and prostate, much less strongly in the brain, skeletal muscle, placenta, lung, mammary gland, macrophage, uterus, testis and gut, but apparently not in the liver, heart and pancreas. Expressed in activated T cells.

The protein localises to the mitochondrion. The catalysed reaction is L-arginine + H2O = urea + L-ornithine. Its pathway is nitrogen metabolism; urea cycle; L-ornithine and urea from L-arginine: step 1/1. Its function is as follows. May play a role in the regulation of extra-urea cycle arginine metabolism and also in down-regulation of nitric oxide synthesis. Extrahepatic arginase functions to regulate L-arginine bioavailability to nitric oxid synthase (NOS). Arginine metabolism is a critical regulator of innate and adaptive immune responses. Seems to be involved in negative regulation of the survival capacity of activated CD4(+) and CD8(+) T cells. May suppress inflammation-related signaling in asthmatic airway epithelium. May contribute to the immune evasion of H.pylori by restricting M1 macrophage activation and polyamine metabolism. In fetal dendritic cells may play a role in promoting immune suppression and T cell TNF-alpha production during gestation. Regulates RPS6KB1 signaling, which promotes endothelial cell senescence and inflammation and implicates NOS3/eNOS dysfunction. Can inhibit endothelial autophagy independently of its enzymatic activity implicating mTORC2 signaling. Involved in vascular smooth muscle cell senescence and apoptosis independently of its enzymatic activity. Since NOS is found in the penile corpus cavernosum smooth muscle, the clitoral corpus cavernosum and the vagina, arginase-2 plays a role in both male and female sexual arousal. The chain is Arginase-2, mitochondrial (ARG2) from Homo sapiens (Human).